A 178-amino-acid chain; its full sequence is Caveolin-1 (178 aa).

Residue Ser2 is modified to N-acetylserine. Ser2 carries the phosphoserine modification. Residues 2 to 94 (SGGKYVDSEG…WKASFTTFTV (93 aa)) form a required for homooligomerization region. Over 2–104 (SGGKYVDSEG…TKYWFYRLLS (103 aa)) the chain is Cytoplasmic. Lys5 bears the N6-acetyllysine; alternate mark. A Glycyl lysine isopeptide (Lys-Gly) (interchain with G-Cter in ubiquitin); alternate cross-link involves residue Lys5. The residue at position 6 (Tyr6) is a Phosphotyrosine. Ser9 is modified (phosphoserine). At Tyr14 the chain carries Phosphotyrosine; by ABL1 and INSR. Position 25 is a phosphotyrosine (Tyr25). Glycyl lysine isopeptide (Lys-Gly) (interchain with G-Cter in ubiquitin) cross-links involve residues Lys26, Lys30, Lys39, Lys47, and Lys57. The interaction with CAVIN3 stretch occupies residues 82-94 (DGIWKASFTTFTV). An intramembrane region (helical) is located at residues 105 to 125 (TIFGIPMALIWGIYFAILSFL). At 126 to 178 (HIWAVVPCIKSFLIEIQCISRVYSIYVHTFCDPLFEAIGKIFSNIRISTQKEI) the chain is on the cytoplasmic side. Residues 131-142 (VPCIKSFLIEIQ) form an interacts with SPRY1, SPRY2, SPRY3 and SPRY4 region. S-palmitoyl cysteine attachment occurs at residues Cys133, Cys143, and Cys156. Residues 149–160 (SIYVHTFCDPLF) are interacts with SPRY1, SPRY2, and SPRY4. Positions 167–178 (FSNIRISTQKEI) are interacts with SPRY1, SPRY2, SPRY3 and SPRY4.

It belongs to the caveolin family. Homooligomer. Interacts (via the N-terminus) with DPP4; the interaction is direct. Forms a stable heterooligomeric complex with CAV2 that targets to lipid rafts and drives caveolae formation. Interacts with BMX, BTK, CTNNB1, CDH1, GLIPR2, JUP, NOSTRIN, SNAP25 and STX1A. Interacts with SLC7A9. Interacts with TGFBR1. Interacts with CTNNB1, CDH1 and JUP. Interacts with PACSIN2; this interaction induces membrane tubulation. Interacts with CAVIN3 (via leucine-zipper domain) in a cholesterol-sensitive manner. Interacts with EHD2 in a cholesterol-dependent manner. Interacts with CAVIN1. Forms a ternary complex with UBXN6 and VCP; mediates CAV1 targeting to lysosomes for degradation. Interacts with ABCG1; this interaction regulates ABCG1-mediated cholesterol efflux. Interacts with NEU3; this interaction enhances NEU3 sialidase activity within caveola. Interacts (via C-terminus) with SPRY1, SPRY2 (via C-terminus), SPRY3, and SPRY4. Interacts with IGFBP5; this interaction allows trafficking of IGFBP5 from the plasma membrane to the nucleus. In terms of processing, the N-terminus of both isoforms are blocked. Post-translationally, phosphorylated at Tyr-14 by ABL1 in response to oxidative stress. Ubiquitinated. Undergo monoubiquitination and multi- and/or polyubiquitination. Monoubiquitination of N-terminal lysines promotes integration in a ternary complex with UBXN6 and VCP which promotes oligomeric CAV1 targeting to lysosomes for degradation. Ubiquitinated by ZNRF1; leading to degradation and modulation of the TLR4-mediated immune response. As to expression, adipose tissue, lung, heart, skeletal muscle, stomach, small bowel, kidney, spleen and testis (at protein level).

It localises to the golgi apparatus membrane. Its subcellular location is the cell membrane. The protein resides in the membrane. It is found in the caveola. The protein localises to the membrane raft. It localises to the golgi apparatus. Its subcellular location is the trans-Golgi network. Its function is as follows. May act as a scaffolding protein within caveolar membranes. Forms a stable heterooligomeric complex with CAV2 that targets to lipid rafts and drives caveolae formation. Mediates the recruitment of CAVIN proteins (CAVIN1/2/3/4) to the caveolae. Interacts directly with G-protein alpha subunits and can functionally regulate their activity. Involved in the costimulatory signal essential for T-cell receptor (TCR)-mediated T-cell activation. Its binding to DPP4 induces T-cell proliferation and NF-kappa-B activation in a T-cell receptor/CD3-dependent manner. Recruits CTNNB1 to caveolar membranes and may regulate CTNNB1-mediated signaling through the Wnt pathway. Negatively regulates TGFB1-mediated activation of SMAD2/3 by mediating the internalization of TGFBR1 from membrane rafts leading to its subsequent degradation. Binds 20(S)-hydroxycholesterol (20(S)-OHC). The protein is Caveolin-1 (Cav1) of Mus musculus (Mouse).